The following is a 219-amino-acid chain: dTTP/UTP pyrophosphatase (219 aa).

Aspartate 79 acts as the Proton acceptor in catalysis.

Belongs to the Maf family. YhdE subfamily. A divalent metal cation serves as cofactor.

The protein localises to the cytoplasm. It catalyses the reaction dTTP + H2O = dTMP + diphosphate + H(+). The enzyme catalyses UTP + H2O = UMP + diphosphate + H(+). In terms of biological role, nucleoside triphosphate pyrophosphatase that hydrolyzes dTTP and UTP. May have a dual role in cell division arrest and in preventing the incorporation of modified nucleotides into cellular nucleic acids. The chain is dTTP/UTP pyrophosphatase from Oleidesulfovibrio alaskensis (strain ATCC BAA-1058 / DSM 17464 / G20) (Desulfovibrio alaskensis).